We begin with the raw amino-acid sequence, 360 residues long: Photosystem II protein D1 (360 aa).

3 consecutive transmembrane segments (helical) span residues 29–46 (YIGW…TATT), 118–133 (HFLL…QWEL), and 142–156 (WICV…AATA). A chlorophyll a-binding site is contributed by H118. A pheophytin a-binding site is contributed by Y126. [CaMn4O5] cluster contacts are provided by D170 and E189. The chain crosses the membrane as a helical span at residues 197 to 218 (FHMLGVAGVFGGSLFSAMHGSL). H198 is a binding site for chlorophyll a. A quinone is bound by residues H215 and 264–265 (SF). H215 contacts Fe cation. H272 is a Fe cation binding site. A helical transmembrane segment spans residues 274–288 (FLGAWPVIGIWFTAM). Residues H332, E333, D342, and A344 each coordinate [CaMn4O5] cluster. Residues 345-360 (SGEQAPVALIAPAING) constitute a propeptide that is removed on maturation.

The protein belongs to the reaction center PufL/M/PsbA/D family. In terms of assembly, PSII is composed of 1 copy each of membrane proteins PsbA, PsbB, PsbC, PsbD, PsbE, PsbF, PsbH, PsbI, PsbJ, PsbK, PsbL, PsbM, PsbT, PsbX, PsbY, PsbZ, Psb30/Ycf12, peripheral proteins PsbO, CyanoQ (PsbQ), PsbU, PsbV and a large number of cofactors. It forms dimeric complexes. The D1/D2 heterodimer binds P680, chlorophylls that are the primary electron donor of PSII, and subsequent electron acceptors. It shares a non-heme iron and each subunit binds pheophytin, quinone, additional chlorophylls, carotenoids and lipids. D1 provides most of the ligands for the Mn4-Ca-O5 cluster of the oxygen-evolving complex (OEC). There is also a Cl(-1) ion associated with D1 and D2, which is required for oxygen evolution. The PSII complex binds additional chlorophylls, carotenoids and specific lipids. is required as a cofactor. Post-translationally, tyr-161 forms a radical intermediate that is referred to as redox-active TyrZ, YZ or Y-Z. In terms of processing, C-terminally processed by CtpA; processing is essential to allow assembly of the oxygen-evolving complex and thus photosynthetic growth.

It localises to the cellular thylakoid membrane. The catalysed reaction is 2 a plastoquinone + 4 hnu + 2 H2O = 2 a plastoquinol + O2. Functionally, photosystem II (PSII) is a light-driven water:plastoquinone oxidoreductase that uses light energy to abstract electrons from H(2)O, generating O(2) and a proton gradient subsequently used for ATP formation. It consists of a core antenna complex that captures photons, and an electron transfer chain that converts photonic excitation into a charge separation. The D1/D2 (PsbA/PsbD) reaction center heterodimer binds P680, the primary electron donor of PSII as well as several subsequent electron acceptors. This Microcystis aeruginosa (strain NIES-843 / IAM M-2473) protein is Photosystem II protein D1.